The chain runs to 153 residues: Phosphatase NudJ (153 aa).

Residues 3–131 (KPHVTVACVV…LVAESIRCYQ (129 aa)) enclose the Nudix hydrolase domain. A Nudix box motif is present at residues 36-57 (GHLEADETLVEAAARELWEETG).

The protein belongs to the Nudix hydrolase family. NudJ subfamily. As to quaternary structure, monomer. The cofactor is Mg(2+).

The polypeptide is Phosphatase NudJ (nudJ) (Shigella boydii serotype 4 (strain Sb227)).